A 502-amino-acid polypeptide reads, in one-letter code: ATP synthase subunit alpha (502 aa).

An ATP-binding site is contributed by 169-176; sequence GDRQTGKT.

Belongs to the ATPase alpha/beta chains family. In terms of assembly, F-type ATPases have 2 components, CF(1) - the catalytic core - and CF(0) - the membrane proton channel. CF(1) has five subunits: alpha(3), beta(3), gamma(1), delta(1), epsilon(1). CF(0) has three main subunits: a(1), b(2) and c(9-12). The alpha and beta chains form an alternating ring which encloses part of the gamma chain. CF(1) is attached to CF(0) by a central stalk formed by the gamma and epsilon chains, while a peripheral stalk is formed by the delta and b chains.

The protein localises to the cell membrane. The catalysed reaction is ATP + H2O + 4 H(+)(in) = ADP + phosphate + 5 H(+)(out). Its function is as follows. Produces ATP from ADP in the presence of a proton gradient across the membrane. The alpha chain is a regulatory subunit. The sequence is that of ATP synthase subunit alpha from Exiguobacterium sibiricum (strain DSM 17290 / CCUG 55495 / CIP 109462 / JCM 13490 / 255-15).